The following is a 128-amino-acid chain: Glycoprotein hormone alpha-2 (128 aa).

Positions 1 to 20 are cleaved as a signal peptide; sequence MPMAPRVLLLCLLGLAVTEG. Intrachain disulfides connect Cys30–Cys88, Cys47–Cys102, Cys56–Cys118, and Cys60–Cys120. Residues Asn36 and Asn80 are each glycosylated (N-linked (GlcNAc...) asparagine).

It belongs to the glycoprotein hormones subunit alpha family. Heterodimer with GPHB5; this heterodimer interacts with thyroid-stimulating hormone receptor (TSHR), and hence stimulates cAMP production.

Its subcellular location is the secreted. Functionally, functions as a heterodimeric glycoprotein hormone with GPHB5 able to bind and activate the thyroid-stimulating hormone receptor (TSHR), leading to increased cAMP production. Plays a central role in controlling thyroid cell metabolism. The sequence is that of Glycoprotein hormone alpha-2 (Gpha2) from Mus musculus (Mouse).